A 491-amino-acid polypeptide reads, in one-letter code: Pre-glycoprotein polyprotein GP complex (491 aa).

Residue G2 is the site of N-myristoyl glycine; by host attachment. The Extracellular segment spans residues 2 to 17 (GQIVTFFQEVPHVIEE). A helical transmembrane segment spans residues 18 to 33 (VMNIVLIALSVLAVLK). Topologically, residues 34–58 (GLYNFATCGLVGLVTFLLLCGRSCT) are cytoplasmic. C57 contributes to the Zn(2+) binding site. At 59-432 (TSLYKGVYEL…QGKTPLGLVD (374 aa)) the chain is on the extracellular side. N-linked (GlcNAc...) asparagine; by host glycans are attached at residues N79, N89, N99, N109, N119, and N167. 6 cysteine pairs are disulfide-bonded: C86/C231, C118/C155, C180/C212, C279/C292, C301/C310, and C364/C385. N224 is a glycosylation site (N-linked (GlcNAc...) asparagine; by host). N365, N373, N390, and N395 each carry an N-linked (GlcNAc...) asparagine; by host glycan. Residues 433–453 (LFVFSTSFYLISIFLHLVKIP) traverse the membrane as a helical segment. Topologically, residues 454 to 491 (THRHIVGKSCPKPHRLNHMGICSCGLYKQPGVPVKWKR) are cytoplasmic. Zn(2+) contacts are provided by H455, H457, C463, H467, C475, and C477.

It belongs to the arenaviridae GPC protein family. As to quaternary structure, interacts with glycoprotein G2. Part of the GP complex (GP-C) together with glycoprotein G1 and glycoprotein G2. The GP-complex interacts with protein Z, which interacts with ribonucleocapsid; these interactions may induce virion budding. In terms of assembly, homotrimer; disulfide-linked. In pre-fusion state, G1 homotrimers bind G2 homotrimers via ionic interactions. Part of the GP complex (GP-C) together with glycoprotein G2 and the stable signal peptide. Interacts with the primary host receptor DAG1 on the cell surface; this interaction occurs at pH 8.0 but not at pH 6.0 and below. Upon virus internalization and at endosomal pH, interacts with the host lysosomal protein LAMP1; this interaction mediates G1 dissociation from GP-C and membrane fusion. The GP-complex interacts with protein Z, which interacts with ribonucleocapsid; these interactions may induce virion budding. Homotrimer. Interacts with the stable signal peptide. In pre-fusion state, G2 homotrimers bind G1 homotrimers via ionic interactions. Part of the GP complex (GP-C) together with glycoprotein G1 and the stable signal peptide. Acidification in the endosome triggers rearrangements, which ultimately leads to a 6 helix bundle formed by the two heptad repeat domains (HR1 and HR2) in post-fusion state. The GP-complex interacts with protein Z, which interacts with ribonucleocapsid; these interactions may induce virion budding. In terms of processing, specific enzymatic cleavages in vivo yield mature proteins. GP-C polyprotein is cleaved in the endoplasmic reticulum by the host protease MBTPS1. Only cleaved glycoprotein is incorporated into virions. Post-translationally, the SSP remains stably associated with the GP complex following cleavage by signal peptidase and plays crucial roles in the trafficking of GP through the secretory pathway. Myristoylation is necessary for GP2-mediated fusion activity.

The protein resides in the virion membrane. It localises to the host endoplasmic reticulum membrane. The protein localises to the host Golgi apparatus membrane. Its subcellular location is the host cell membrane. In terms of biological role, functions as a cleaved signal peptide that is retained as the third component of the GP complex (GP-C). Helps to stabilize the spike complex in its native conformation. The SSP is required for efficient glycoprotein expression, post-translational maturation cleavage of G1 and G2, glycoprotein transport to the cell surface plasma membrane, formation of infectious virus particles, and acid pH-dependent glycoprotein-mediated cell fusion. Functionally, forms the virion spikes together with glycoprotein G2. The glycoprotein spike trimers are connected to the underlying matrix. Interacts with the host receptor. Mediates virus attachment to the host primary receptor alpha-dystroglycan DAG1 (alpha-DG) at the cell surface. This attachment induces virion internalization apparently through macropinocytosis. Following endocytosis, there is a pH-dependent switch from binding DAG1 to the host lysosomal receptor LAMP1. This latter binding triggers the dissociation of GP1, exposing the fusion subunit, GP2, such that fusion can occur. Down-modulates host DAG1. Forms the virion spikes together with glycoprotein G1. The glycoprotein spike trimers are connected to the underlying matrix. Class I viral fusion protein that directs fusion of viral and host endosomal membranes, leading to delivery of the nucleocapsid into the cytoplasm. Membrane fusion is mediated by irreversible conformational changes induced by acidification. This is Pre-glycoprotein polyprotein GP complex from Homo sapiens (Human).